Here is a 342-residue protein sequence, read N- to C-terminus: Nucleoid-associated protein Spea_1765 (342 aa).

Belongs to the YejK family.

It is found in the cytoplasm. It localises to the nucleoid. The chain is Nucleoid-associated protein Spea_1765 from Shewanella pealeana (strain ATCC 700345 / ANG-SQ1).